Reading from the N-terminus, the 86-residue chain is Diphthamide biosynthesis protein 3 (86 aa).

Positions 4–60 (YHDEVEIEDFEYDEEEEMYYYPCPCGDRFQISKEELIEGEEVATCPSCSLVIKVIYD) constitute a DPH-type MB domain. Residues cysteine 26, cysteine 28, cysteine 48, and cysteine 51 each coordinate Fe cation.

It belongs to the DPH3 family. As to quaternary structure, component of the 2-(3-amino-3-carboxypropyl)histidine synthase complex composed of Dph1, Dph2, Dph3 and a NADH-dependent reductase. It depends on Fe(2+) as a cofactor.

The catalysed reaction is [3Fe-4S](1+)-[protein] + Fe(2+)-[Dph3] = [3Fe-4S](0)-[protein] + Fe(3+)-[Dph3]. It carries out the reaction 2 [3Fe-4S](0)-[protein] + 2 Fe(2+)-[Dph3] + NADH = 2 [4Fe-4S](1+)-[protein] + 2 [Dph3] + NAD(+) + H(+). Its pathway is protein modification; peptidyl-diphthamide biosynthesis. In terms of biological role, required for the first step of diphthamide biosynthesis, a post-translational modification of histidine which occurs in elongation factor 2. Dph1 and Dph2 transfer a 3-amino-3-carboxypropyl (ACP) group from S-adenosyl-L-methionine (SAM) to a histidine residue, the reaction is assisted by a reduction system comprising Dph3 and a NADH-dependent reductase. Acts as an electron donor to reduce the Fe-S cluster in Dph1-Dph2 keeping the [4Fe-4S] clusters in the active and reduced state. Restores iron to Dph1-Dph2 iron-sulfur clusters which have degraded from [4Fe-4S] to [3Fe-4S] by donating an iron atom to reform [4Fe-4S] clusters, in a manner dependent on the presence of elongation factor 2 and SAM. Associates with the elongator complex and is required for tRNA Wobble base modifications mediated by the elongator complex. The elongator complex is required for multiple tRNA modifications, including mcm5U (5-methoxycarbonylmethyl uridine), mcm5s 2U (5-methoxycarbonylmethyl-2-thiouridine), and ncm5U (5-carbamoylmethyl uridine). The sequence is that of Diphthamide biosynthesis protein 3 from Drosophila melanogaster (Fruit fly).